Reading from the N-terminus, the 358-residue chain is Phospho-N-acetylmuramoyl-pentapeptide-transferase (358 aa).

Transmembrane regions (helical) follow at residues 19–39 (YLTLRAILSTLTALLIAVLIG), 71–91 (TMGGLLILAAIVVSVLLWADL), 95–115 (YVWVTLSVVVGYGIIGFIDDY), 126–146 (LIARWKYFWQSVIAIGVALYL), 166–186 (VMPQMGMFFVVMTYFVIVGTS), 194–214 (GLDGLAIVPTVLVAGAFAIFA), 237–257 (LVIVCTAIVGAGLGFLWFNTY), 261–281 (VFMGDVGSLALGGTLGIIAVL), 286–306 (IVLVIMGGVFVVETLSVILQV), and 336–356 (VIVRFWIISIILVLVGLATLK).

The protein belongs to the glycosyltransferase 4 family. MraY subfamily. Mg(2+) is required as a cofactor.

The protein resides in the cell inner membrane. The enzyme catalyses UDP-N-acetyl-alpha-D-muramoyl-L-alanyl-gamma-D-glutamyl-meso-2,6-diaminopimeloyl-D-alanyl-D-alanine + di-trans,octa-cis-undecaprenyl phosphate = di-trans,octa-cis-undecaprenyl diphospho-N-acetyl-alpha-D-muramoyl-L-alanyl-D-glutamyl-meso-2,6-diaminopimeloyl-D-alanyl-D-alanine + UMP. It participates in cell wall biogenesis; peptidoglycan biosynthesis. Catalyzes the initial step of the lipid cycle reactions in the biosynthesis of the cell wall peptidoglycan: transfers peptidoglycan precursor phospho-MurNAc-pentapeptide from UDP-MurNAc-pentapeptide onto the lipid carrier undecaprenyl phosphate, yielding undecaprenyl-pyrophosphoryl-MurNAc-pentapeptide, known as lipid I. This is Phospho-N-acetylmuramoyl-pentapeptide-transferase from Pseudoalteromonas atlantica (strain T6c / ATCC BAA-1087).